The following is a 274-amino-acid chain: MAVIKMKPTSPGRRAVVKVTREHLHKGQPHAPLLEPQFQKAGRNNNGHITTRHKGGGHKHHYRVVDFKRNKDGIAAKVERIEYDPNRTAHIALVCYADGERRYIIAPRNLEVGATLLSGAEAPIRAGNTLPIRNIPVGSTIHCIELKPGAGAQIARSAGASATLLAREGTYAQVRMRSGEVRKIHIECRATIGEVANEEHSLRQLGKAGVKRWMGIRPTVRGVAMNPVDHPHGGGEGRTGEGRHAVDPWGNLTKGYRTRNNKRTQSMIVSRRKK.

A disordered region spans residues 223 to 274; sequence VAMNPVDHPHGGGEGRTGEGRHAVDPWGNLTKGYRTRNNKRTQSMIVSRRKK. Basic and acidic residues predominate over residues 229–246; it reads DHPHGGGEGRTGEGRHAV.

Belongs to the universal ribosomal protein uL2 family. Part of the 50S ribosomal subunit. Forms a bridge to the 30S subunit in the 70S ribosome.

In terms of biological role, one of the primary rRNA binding proteins. Required for association of the 30S and 50S subunits to form the 70S ribosome, for tRNA binding and peptide bond formation. It has been suggested to have peptidyltransferase activity; this is somewhat controversial. Makes several contacts with the 16S rRNA in the 70S ribosome. This Verminephrobacter eiseniae (strain EF01-2) protein is Large ribosomal subunit protein uL2.